A 120-amino-acid polypeptide reads, in one-letter code: Large ribosomal subunit protein uL22 (120 aa).

The interval 1–22 (MLVNRRYTAKGKNLPSSPKKVR) is disordered.

It belongs to the universal ribosomal protein uL22 family. In terms of assembly, part of the 50S ribosomal subunit.

This protein binds specifically to 23S rRNA; its binding is stimulated by other ribosomal proteins, e.g. L4, L17, and L20. It is important during the early stages of 50S assembly. It makes multiple contacts with different domains of the 23S rRNA in the assembled 50S subunit and ribosome. Functionally, the globular domain of the protein is located near the polypeptide exit tunnel on the outside of the subunit, while an extended beta-hairpin is found that lines the wall of the exit tunnel in the center of the 70S ribosome. This is Large ribosomal subunit protein uL22 from Borreliella burgdorferi (strain ATCC 35210 / DSM 4680 / CIP 102532 / B31) (Borrelia burgdorferi).